Consider the following 512-residue polypeptide: Maturase K (512 aa).

The protein belongs to the intron maturase 2 family. MatK subfamily.

It is found in the plastid. The protein localises to the chloroplast. Usually encoded in the trnK tRNA gene intron. Probably assists in splicing its own and other chloroplast group II introns. In Lilium canadense (Canada lily), this protein is Maturase K.